A 600-amino-acid chain; its full sequence is Adenine deaminase 2 (600 aa).

Belongs to the metallo-dependent hydrolases superfamily. Adenine deaminase family. The cofactor is Mn(2+).

It carries out the reaction adenine + H2O + H(+) = hypoxanthine + NH4(+). The chain is Adenine deaminase 2 from Bradyrhizobium sp. (strain ORS 278).